Here is a 97-residue protein sequence, read N- to C-terminus: Scorpine-like peptide Ev37 (97 aa).

The first 19 residues, 1–19 (MNSKLTVIVLLALITIASC), serve as a signal peptide directing secretion. One can recognise a BetaSPN-type CS-alpha/beta domain in the interval 55–95 (QNLCAFNVDTVGMCDADCKRQGKAKGVCHGTKCKCDVELSY). Cystine bridges form between C58–C82, C68–C87, and C72–C89.

Belongs to the long chain scorpion toxin family. Class 3 subfamily. In terms of tissue distribution, expressed by the venom gland.

It localises to the secreted. Its function is as follows. Selectively inhibits Kv1.3/KCNA3 channel (IC(50)=0.95 uM). Both N-terminal and C-terminal domains are likely involved in the interaction with Kv1.3/KCNA3, since neither its N-terminal domain (1-36) nor its C-terminal domain (37-78) block Kv1.3/KCNA3 channel. The chain is Scorpine-like peptide Ev37 from Euscorpiops validus (Scorpion).